A 432-amino-acid chain; its full sequence is RING finger protein 44 (432 aa).

Residues 1–86 (MRPWALAVTR…GGSPRMLHPA (86 aa)) are disordered. Pro residues predominate over residues 56–65 (QQPPSRPPHL). The segment at 380-421 (CVVCFSDFEARQLLRVLPCNHEFHTKCVDKWLKANRTCPICR) adopts an RING-type; atypical zinc-finger fold.

The protein is RING finger protein 44 (RNF44) of Homo sapiens (Human).